Consider the following 175-residue polypeptide: Inorganic pyrophosphatase (175 aa).

K30, R44, and Y56 together coordinate substrate. The Mg(2+) site is built by D66, D71, and D103. Residue Y142 participates in substrate binding.

Belongs to the PPase family. Homohexamer. The cofactor is Mg(2+).

It localises to the cytoplasm. The catalysed reaction is diphosphate + H2O = 2 phosphate + H(+). Functionally, catalyzes the hydrolysis of inorganic pyrophosphate (PPi) forming two phosphate ions. This is Inorganic pyrophosphatase from Ralstonia nicotianae (strain ATCC BAA-1114 / GMI1000) (Ralstonia solanacearum).